The chain runs to 180 residues: ATP synthase subunit delta (180 aa).

Belongs to the ATPase delta chain family. As to quaternary structure, F-type ATPases have 2 components, F(1) - the catalytic core - and F(0) - the membrane proton channel. F(1) has five subunits: alpha(3), beta(3), gamma(1), delta(1), epsilon(1). F(0) has three main subunits: a(1), b(2) and c(10-14). The alpha and beta chains form an alternating ring which encloses part of the gamma chain. F(1) is attached to F(0) by a central stalk formed by the gamma and epsilon chains, while a peripheral stalk is formed by the delta and b chains.

It localises to the cell membrane. Its function is as follows. F(1)F(0) ATP synthase produces ATP from ADP in the presence of a proton or sodium gradient. F-type ATPases consist of two structural domains, F(1) containing the extramembraneous catalytic core and F(0) containing the membrane proton channel, linked together by a central stalk and a peripheral stalk. During catalysis, ATP synthesis in the catalytic domain of F(1) is coupled via a rotary mechanism of the central stalk subunits to proton translocation. In terms of biological role, this protein is part of the stalk that links CF(0) to CF(1). It either transmits conformational changes from CF(0) to CF(1) or is implicated in proton conduction. The protein is ATP synthase subunit delta of Bacillus cereus (strain G9842).